Here is a 454-residue protein sequence, read N- to C-terminus: tRNA modification GTPase MnmE (454 aa).

Positions 23, 80, and 120 each coordinate (6S)-5-formyl-5,6,7,8-tetrahydrofolate. Residues 216–377 (GMKVVIAGRP…LRNHLKQSMG (162 aa)) form the TrmE-type G domain. Residue Asn-226 coordinates K(+). GTP-binding positions include 226-231 (NAGKSS), 245-251 (TDIAGTT), 270-273 (DTAG), 335-338 (NKAD), and 358-360 (SAR). Mg(2+) is bound at residue Ser-230. The K(+) site is built by Thr-245, Ile-247, and Thr-250. Thr-251 is a binding site for Mg(2+). Residue Lys-454 participates in (6S)-5-formyl-5,6,7,8-tetrahydrofolate binding.

Belongs to the TRAFAC class TrmE-Era-EngA-EngB-Septin-like GTPase superfamily. TrmE GTPase family. In terms of assembly, homodimer. Heterotetramer of two MnmE and two MnmG subunits. The cofactor is K(+).

The protein localises to the cytoplasm. Its function is as follows. Exhibits a very high intrinsic GTPase hydrolysis rate. Involved in the addition of a carboxymethylaminomethyl (cmnm) group at the wobble position (U34) of certain tRNAs, forming tRNA-cmnm(5)s(2)U34. The polypeptide is tRNA modification GTPase MnmE (Salmonella gallinarum (strain 287/91 / NCTC 13346)).